A 492-amino-acid chain; its full sequence is Cysteine--tRNA ligase (492 aa).

Cys27 provides a ligand contact to Zn(2+). The 'HIGH' region signature appears at 29-39 (VTVYDLCHLGH). The Zn(2+) site is built by Cys211, His236, and Glu240. Positions 268–272 (KMSKS) match the 'KMSKS' region motif. Lys271 lines the ATP pocket.

It belongs to the class-I aminoacyl-tRNA synthetase family. In terms of assembly, monomer. The cofactor is Zn(2+).

Its subcellular location is the cytoplasm. It carries out the reaction tRNA(Cys) + L-cysteine + ATP = L-cysteinyl-tRNA(Cys) + AMP + diphosphate. The sequence is that of Cysteine--tRNA ligase from Prochlorococcus marinus subsp. pastoris (strain CCMP1986 / NIES-2087 / MED4).